A 274-amino-acid chain; its full sequence is Thiamine kinase (274 aa).

Belongs to the thiamine kinase family.

The enzyme catalyses thiamine + ATP = thiamine phosphate + ADP + H(+). The protein operates within cofactor biosynthesis; thiamine diphosphate biosynthesis; thiamine phosphate from thiamine: step 1/1. Catalyzes the ATP-dependent phosphorylation of thiamine to thiamine phosphate. Is involved in thiamine salvage. The chain is Thiamine kinase from Escherichia coli O45:K1 (strain S88 / ExPEC).